We begin with the raw amino-acid sequence, 189 residues long: NADH-quinone oxidoreductase subunit B (189 aa).

[4Fe-4S] cluster contacts are provided by C39, C40, C104, and C135.

This sequence belongs to the complex I 20 kDa subunit family. NDH-1 is composed of 14 different subunits. Subunits NuoB, C, D, E, F, and G constitute the peripheral sector of the complex. It depends on [4Fe-4S] cluster as a cofactor.

It is found in the cell inner membrane. It catalyses the reaction a quinone + NADH + 5 H(+)(in) = a quinol + NAD(+) + 4 H(+)(out). In terms of biological role, NDH-1 shuttles electrons from NADH, via FMN and iron-sulfur (Fe-S) centers, to quinones in the respiratory chain. The immediate electron acceptor for the enzyme in this species is believed to be a menaquinone. Couples the redox reaction to proton translocation (for every two electrons transferred, four hydrogen ions are translocated across the cytoplasmic membrane), and thus conserves the redox energy in a proton gradient. This Chlorobium limicola (strain DSM 245 / NBRC 103803 / 6330) protein is NADH-quinone oxidoreductase subunit B.